A 381-amino-acid polypeptide reads, in one-letter code: YVPKLEEERIVIYSTMDRADLAEHRLEAICAAMIESWGYSELTHQIRRFYSWLLQQQPFASIAQEGKAPYIASMALRKLYMDRAVDEEELRVFTEMMVALDDEFECDSYEVHHQANDTIDTGGNSKKDVKPEQGSIQPSSNKGKEKDVNAGTSGTHTVPRIKAITAKMRMPKSKGAAVLKLDHLLEYAPQQIDISNTRATQSQFDTWYEAVRVAYDIGETEMPTVMNGLMVWCIENGTSPNINGVWVMMDGSEQVEYPLKPIVENAKPTLRQIMAHFSDVAEAYIEMRNKKEPYMPRYGLVRNLRDASLARYAFDFYEVTSRTPVRAREAHIQMKAAALKSAQSRLFGLDGGVSTQEENTERHTTEDVSPSMHTLLGVKNM.

The segment at alanine 115–threonine 155 is disordered.

The protein belongs to the potyviridae genome polyprotein family. In terms of processing, genome polyprotein of potyviruses undergoes post-translational proteolytic processing by the main proteinase NIa-pro resulting in the production of at least ten individual proteins. The P1 proteinase and the HC-pro cleave only their respective C-termini autocatalytically. 6K1 is essential for proper proteolytic separation of P3 from CI.

It localises to the virion. The enzyme catalyses RNA(n) + a ribonucleoside 5'-triphosphate = RNA(n+1) + diphosphate. Functionally, an RNA-dependent RNA polymerase that plays an essential role in the virus replication. In terms of biological role, involved in aphid transmission, cell-to-cell and systemis movement, encapsidation of the viral RNA and in the regulation of viral RNA amplification. The sequence is that of Genome polyprotein from Capsicum annuum (Capsicum pepper).